Consider the following 166-residue polypeptide: MDMTNAQRLILSNQYYLMSQMDPTNAEKYKRQQLIVERGYELQIRELDKDFGCITETECREIIDFMEMYHAMQESYNMLSEECQAKVDARRLQFLGFDIATEAQQVNYVRFLTSSEGLYPQFDKADHHFNSQMPMLDKYRRMLTTWRNCPRQYHLCSTELAQIFNA.

This sequence belongs to the UPF0304 family.

The protein is UPF0304 protein VF_1794 of Aliivibrio fischeri (strain ATCC 700601 / ES114) (Vibrio fischeri).